Consider the following 755-residue polypeptide: Leucine-rich repeat-containing protein 36 (755 aa).

LRR repeat units follow at residues Ser51–Cys72 and Ser73–Gln94. The LRRCT domain occupies Asn107–His146. Disordered stretches follow at residues Gly354–His374 and Leu448–Ser517. The span at Asn356–Ala370 shows a compositional bias: basic and acidic residues. The segment covering Leu498–Gly510 has biased composition (low complexity). Residues Val601–Glu671 adopt a coiled-coil conformation. A disordered region spans residues Tyr701–Ser755. Residues Phe721–Pro731 show a composition bias toward polar residues.

The sequence is that of Leucine-rich repeat-containing protein 36 (Lrrc36) from Mus musculus (Mouse).